The chain runs to 831 residues: DNA polymerase I, thermostable (831 aa).

Residues 174-258 form the 5'-3' exonuclease domain; it reads RPEQWVDYRA…TDLPLEVDFG (85 aa). Residues 409 to 831 are polymerase; it reads ERLFQTLKER…LGEDWLSAKE (423 aa).

This sequence belongs to the DNA polymerase type-A family.

The enzyme catalyses DNA(n) + a 2'-deoxyribonucleoside 5'-triphosphate = DNA(n+1) + diphosphate. In terms of biological role, in addition to polymerase activity, this DNA polymerase exhibits 5'-3' exonuclease activity. The protein is DNA polymerase I, thermostable (polA) of Thermus thermophilus.